The chain runs to 294 residues: Glyceraldehyde-3-phosphate dehydrogenase (294 aa).

NAD(+)-binding residues include D19, K63, and T105. D-glyceraldehyde 3-phosphate contacts are provided by residues 134-136 (SCT), T165, 194-195 (TG), and R217. Catalysis depends on C135, which acts as the Nucleophile.

It belongs to the glyceraldehyde-3-phosphate dehydrogenase family. Homotetramer.

The protein localises to the cytoplasm. The catalysed reaction is D-glyceraldehyde 3-phosphate + phosphate + NAD(+) = (2R)-3-phospho-glyceroyl phosphate + NADH + H(+). It participates in carbohydrate degradation; glycolysis; pyruvate from D-glyceraldehyde 3-phosphate: step 1/5. Catalyzes the oxidative phosphorylation of glyceraldehyde 3-phosphate (G3P) to 1,3-bisphosphoglycerate (BPG) using the cofactor NAD. The first reaction step involves the formation of a hemiacetal intermediate between G3P and a cysteine residue, and this hemiacetal intermediate is then oxidized to a thioester, with concomitant reduction of NAD to NADH. The reduced NADH is then exchanged with the second NAD, and the thioester is attacked by a nucleophilic inorganic phosphate to produce BPG. In Atlantibacter hermannii (Escherichia hermannii), this protein is Glyceraldehyde-3-phosphate dehydrogenase (gap).